The following is an 817-amino-acid chain: Fibroblast growth factor receptor 2 (817 aa).

The N-terminal stretch at 1–22 is a signal peptide; the sequence is MFARGWLLGALLLMTLATVSVA. Topologically, residues 23–377 are extracellular; the sequence is RPSLKIDLVN…ETDYPPDYVE (355 aa). Ig-like C2-type domains are found at residues 26 to 126, 159 to 247, and 256 to 358; these read LKID…VNVT, PEKM…YTLD, and PILQ…AWLT. Asn32, Asn84, and Asn124 each carry an N-linked (GlcNAc...) asparagine glycan. Cys63 and Cys108 are disulfide-bonded. The heparin-binding stretch occupies residues 161 to 178; that stretch reads KMEKKLHAVPAANTVKFR. Cys179 and Cys231 form a disulfide bridge. N-linked (GlcNAc...) asparagine glycans are attached at residues Asn228, Asn265, Asn297, Asn318, and Asn331. Residues Cys278 and Cys342 are joined by a disulfide bond. Residues 378-398 traverse the membrane as a helical segment; it reads IAIYCIGVFLIACMVVIVVVC. Residues 399–817 lie on the Cytoplasmic side of the membrane; that stretch reads RMRTSAKKPD…YQHINGGIKT (419 aa). The interval 429–465 is disordered; it reads TVSSDSSSSMSSSTPLVRITTRRSSAHDDPIPEYDLP. Residues 431–441 are compositionally biased toward low complexity; it reads SSDSSSSMSSS. Tyr462 carries the phosphotyrosine; by autocatalysis modification. The 290-residue stretch at 477-766 folds into the Protein kinase domain; the sequence is LTLGKPLGEG…LTLATNEEYL (290 aa). ATP-binding positions include 483–491, Lys513, 561–563, and Asn567; these read LGEGCFGQV and EYA. A Phosphotyrosine; by autocatalysis modification is found at Tyr582. Asp622 acts as the Proton acceptor in catalysis. A phosphotyrosine; by autocatalysis mark is found at Tyr652, Tyr653, and Tyr765.

This sequence belongs to the protein kinase superfamily. Tyr protein kinase family. Fibroblast growth factor receptor subfamily. Monomer. Homodimer after ligand binding. In terms of processing, autophosphorylated. Binding of FGF family members together with heparan sulfate proteoglycan or heparin promotes receptor dimerization and autophosphorylation on tyrosine residues. Autophosphorylation occurs in trans between the two FGFR molecules present in the dimer. Post-translationally, N-glycosylated in the endoplasmic reticulum. The N-glycan chains undergo further maturation to an Endo H-resistant form in the Golgi apparatus. Ubiquitinated. FGFR2 is rapidly ubiquitinated after autophosphorylation, leading to internalization and degradation. Subject to degradation both in lysosomes and by the proteasome.

The protein resides in the cell membrane. The protein localises to the golgi apparatus. It is found in the cytoplasmic vesicle. It carries out the reaction L-tyrosyl-[protein] + ATP = O-phospho-L-tyrosyl-[protein] + ADP + H(+). Its activity is regulated as follows. Present in an inactive conformation in the absence of bound ligand. Ligand binding leads to dimerization and activation by autophosphorylation on tyrosine residues. Functionally, tyrosine-protein kinase that acts as a cell-surface receptor for fibroblast growth factors and plays an essential role in the regulation of cell proliferation, differentiation, migration and apoptosis, and in the regulation of embryonic development. Required for normal embryonic patterning, limb bud development, lung morphogenesis, osteogenesis and skin development. Plays an essential role in the regulation of osteoblast differentiation, proliferation and apoptosis, and is required for normal skeleton development. Promotes cell proliferation in keratinocytes and immature osteoblasts, but promotes apoptosis in differentiated osteoblasts. Phosphorylates PLCG1, FRS2 and PAK4. Ligand binding leads to the activation of several signaling cascades. Activation of PLCG1 leads to the production of the cellular signaling molecules diacylglycerol and inositol 1,4,5-trisphosphate. Phosphorylation of FRS2 triggers recruitment of GRB2, GAB1, PIK3R1 and SOS1, and mediates activation of RAS, MAPK1/ERK2, MAPK3/ERK1 and the MAP kinase signaling pathway, as well as of the AKT1 signaling pathway. FGFR2 signaling is down-regulated by ubiquitination, internalization and degradation. Mutations that lead to constitutive kinase activation or impair normal FGFR2 maturation, internalization and degradation lead to aberrant signaling. Over-expressed FGFR2 promotes activation of STAT1. This Danio rerio (Zebrafish) protein is Fibroblast growth factor receptor 2 (fgfr2).